Consider the following 579-residue polypeptide: Adenine deaminase (579 aa).

This sequence belongs to the metallo-dependent hydrolases superfamily. Adenine deaminase family. It depends on Mn(2+) as a cofactor.

It catalyses the reaction adenine + H2O + H(+) = hypoxanthine + NH4(+). The protein is Adenine deaminase of Listeria innocua serovar 6a (strain ATCC BAA-680 / CLIP 11262).